The sequence spans 272 residues: Merozoite surface protein 2 (272 aa).

An N-terminal signal peptide occupies residues 1 to 20 (MKVIKTLSIINFFIFVTFNI). 2 N-linked (GlcNAc...) asparagine glycosylation sites follow: Asn22 and Asn36. Positions 44 to 198 (AESKPSTGAG…EQTESPELQS (155 aa)) are polymorphic region. The disordered stretch occupies residues 45 to 233 (ESKPSTGAGG…DSQKECTDGN (189 aa)). Positions 51–82 (GAGGSAGGSAGGSAGGSAGGSAGGSAGSGDGN) are enriched in gly residues. 6 tandem repeats follow at residues 53-56 (GGSA), 57-60 (GGSA), 61-64 (GGSA), 65-68 (GGSA), 69-72 (GGSA), and 73-76 (GGSA). Residues 53–76 (GGSAGGSAGGSAGGSAGGSAGGSA) form a 6 X 4 AA tandem repeats of G-G-S-A region. Low complexity predominate over residues 83 to 119 (GADAEGSSSTPATTTTTKTTTTTTTTNDAEASTSTSS). Basic and acidic residues predominate over residues 122-137 (PNHKNAETNPKGKGEV). 2 stretches are compositionally biased toward polar residues: residues 139 to 165 (EPNQ…NVPP) and 172 to 200 (KSPT…QSAP). The N-linked (GlcNAc...) asparagine glycan is linked to Asn149. Asn221 is a glycosylation site (N-linked (GlcNAc...) asparagine). A disulfide bond links Cys229 and Cys237. N-linked (GlcNAc...) asparagine glycans are attached at residues Asn245 and Asn246. Asn246 carries the GPI-anchor amidated asparagine lipid modification. Residues 247–272 (SSNIASINKFVVLISATLVLSFAIFI) constitute a propeptide, removed in mature form.

It localises to the cell membrane. Its function is as follows. May play a role in the merozoite attachment to the erythrocyte. This Plasmodium falciparum (isolate 3D7) protein is Merozoite surface protein 2.